The following is a 497-amino-acid chain: Probable cytosol aminopeptidase (497 aa).

Residues K268 and D273 each contribute to the Mn(2+) site. Residue K280 is part of the active site. Mn(2+) contacts are provided by D291, D350, and E352. Residue R354 is part of the active site.

The protein belongs to the peptidase M17 family. Requires Mn(2+) as cofactor.

It is found in the cytoplasm. The enzyme catalyses Release of an N-terminal amino acid, Xaa-|-Yaa-, in which Xaa is preferably Leu, but may be other amino acids including Pro although not Arg or Lys, and Yaa may be Pro. Amino acid amides and methyl esters are also readily hydrolyzed, but rates on arylamides are exceedingly low.. It carries out the reaction Release of an N-terminal amino acid, preferentially leucine, but not glutamic or aspartic acids.. In terms of biological role, presumably involved in the processing and regular turnover of intracellular proteins. Catalyzes the removal of unsubstituted N-terminal amino acids from various peptides. The polypeptide is Probable cytosol aminopeptidase (Alkalilimnicola ehrlichii (strain ATCC BAA-1101 / DSM 17681 / MLHE-1)).